Reading from the N-terminus, the 317-residue chain is Membrane-associated protein VIPP1, chloroplastic (317 aa).

Positions 92 to 246 form a coiled coil; sequence EMNDDLTKMR…SQAEALGQLA (155 aa). The tract at residues 265 to 317 is disordered; the sequence is DLAQMKKEISGSSSKGELPPGRTAVSNSGAARPFRDIEIENELNELRKKANEY. Over residues 297–317 the composition is skewed to basic and acidic residues; sequence PFRDIEIENELNELRKKANEY.

This sequence belongs to the PspA/Vipp/IM30 family. Homomultimer. Complex formation involves interaction via the central alpha-helical domain (71-286). As to quaternary structure, (Microbial infection) Interacts with the rice tungro bacilliform virus (RTBV) capsid protein.

Its subcellular location is the plastid. It localises to the chloroplast inner membrane. The protein resides in the chloroplast thylakoid membrane. Its function is as follows. Required for plastid vesicle formation and thylakoid membrane biogenesis, but not for functional assembly of thylakoid protein complexes. The sequence is that of Membrane-associated protein VIPP1, chloroplastic from Oryza sativa subsp. japonica (Rice).